The sequence spans 224 residues: Deoxyribose-phosphate aldolase (224 aa).

The Proton donor/acceptor role is filled by aspartate 92. Residue lysine 155 is the Schiff-base intermediate with acetaldehyde of the active site. Lysine 184 functions as the Proton donor/acceptor in the catalytic mechanism.

Belongs to the DeoC/FbaB aldolase family. DeoC type 1 subfamily.

It localises to the cytoplasm. The enzyme catalyses 2-deoxy-D-ribose 5-phosphate = D-glyceraldehyde 3-phosphate + acetaldehyde. It functions in the pathway carbohydrate degradation; 2-deoxy-D-ribose 1-phosphate degradation; D-glyceraldehyde 3-phosphate and acetaldehyde from 2-deoxy-alpha-D-ribose 1-phosphate: step 2/2. Its function is as follows. Catalyzes a reversible aldol reaction between acetaldehyde and D-glyceraldehyde 3-phosphate to generate 2-deoxy-D-ribose 5-phosphate. This Clostridium perfringens (strain 13 / Type A) protein is Deoxyribose-phosphate aldolase.